Reading from the N-terminus, the 957-residue chain is Glycine dehydrogenase (decarboxylating) (957 aa).

N6-(pyridoxal phosphate)lysine is present on Lys-702.

It belongs to the GcvP family. As to quaternary structure, the glycine cleavage system is composed of four proteins: P, T, L and H. Requires pyridoxal 5'-phosphate as cofactor.

It carries out the reaction N(6)-[(R)-lipoyl]-L-lysyl-[glycine-cleavage complex H protein] + glycine + H(+) = N(6)-[(R)-S(8)-aminomethyldihydrolipoyl]-L-lysyl-[glycine-cleavage complex H protein] + CO2. Functionally, the glycine cleavage system catalyzes the degradation of glycine. The P protein binds the alpha-amino group of glycine through its pyridoxal phosphate cofactor; CO(2) is released and the remaining methylamine moiety is then transferred to the lipoamide cofactor of the H protein. The polypeptide is Glycine dehydrogenase (decarboxylating) (Synechococcus sp. (strain RCC307)).